Consider the following 420-residue polypeptide: UDP-N-acetylglucosamine 1-carboxyvinyltransferase (420 aa).

Position 22–23 (22–23 (KN)) interacts with phosphoenolpyruvate. UDP-N-acetyl-alpha-D-glucosamine is bound at residue Arg93. Cys117 acts as the Proton donor in catalysis. Cys117 carries the post-translational modification 2-(S-cysteinyl)pyruvic acid O-phosphothioketal. 2 residues coordinate UDP-N-acetyl-alpha-D-glucosamine: Asp307 and Ile329.

It belongs to the EPSP synthase family. MurA subfamily.

It is found in the cytoplasm. It catalyses the reaction phosphoenolpyruvate + UDP-N-acetyl-alpha-D-glucosamine = UDP-N-acetyl-3-O-(1-carboxyvinyl)-alpha-D-glucosamine + phosphate. Its pathway is cell wall biogenesis; peptidoglycan biosynthesis. Functionally, cell wall formation. Adds enolpyruvyl to UDP-N-acetylglucosamine. This is UDP-N-acetylglucosamine 1-carboxyvinyltransferase from Cellvibrio japonicus (strain Ueda107) (Pseudomonas fluorescens subsp. cellulosa).